The chain runs to 661 residues: MSNFSIISDYKPAGDQPKAIDEIIKGLNNKKRSQMLLGITGSGKTFTMANIIERTNRPTLIMAHNKTLAAQIYSEMKSIFPKNAVEYFVSYYDYYQPEAYIPKTDVFIEKDSSINEQIDLMRHSATRSLLERRDVIVVSSVSCIYGLGSPDLYYQMTVNLEPGKSYPRDKLLNDLVNLQYERNDIGFERGCFRVKGDNVDVFPSHYSDKAWRLSFFGNELEYIHEFDPLTGEKLVKLDKAIIYGNSHFVMPKETVNKAISEIEEELQKRIAFLKSQDKLLETQRINQRTQYDLEMLTETGSCKGVENYSRFFTGRKAGEPPPTLFEYLPKDALLFVDESHVSVPQIRAMYNGDRARKEVLVEHGFRLPSALDNRPLKFEEWDNFRPQTVFVSATPSLFELNETGGEVVELIIRPTGLLDPECIIKPATNQVEDLVGEIQSTIAKGFCVLVTTLTKKMAEDLTNYLQELKYKTSYLHSNVHTLERIEILRDLRQGTIDILVGINLLREGLDIPECGLVAILDADKEGFLRSEVSLIQTIGRAARNSEGRVILYADKMTKSIDKAISETMRRRTIQQEHNEKYGIIPKTINRTIHALAELEKVDSKLDKKQTHNLFENPAKLKAHIDKLRKEMLKAASNLEFEQAAKLRDQLKTLEEAALELS.

The 158-residue stretch at 25 to 182 folds into the Helicase ATP-binding domain; sequence KGLNNKKRSQ…NDLVNLQYER (158 aa). 38–45 is an ATP binding site; the sequence is GITGSGKT. A Beta-hairpin motif is present at residues 91–114; the sequence is YYDYYQPEAYIPKTDVFIEKDSSI. Positions 430-592 constitute a Helicase C-terminal domain; sequence QVEDLVGEIQ…IIPKTINRTI (163 aa). One can recognise a UVR domain in the interval 621 to 656; the sequence is KAHIDKLRKEMLKAASNLEFEQAAKLRDQLKTLEEA.

The protein belongs to the UvrB family. In terms of assembly, forms a heterotetramer with UvrA during the search for lesions. Interacts with UvrC in an incision complex.

The protein resides in the cytoplasm. The UvrABC repair system catalyzes the recognition and processing of DNA lesions. A damage recognition complex composed of 2 UvrA and 2 UvrB subunits scans DNA for abnormalities. Upon binding of the UvrA(2)B(2) complex to a putative damaged site, the DNA wraps around one UvrB monomer. DNA wrap is dependent on ATP binding by UvrB and probably causes local melting of the DNA helix, facilitating insertion of UvrB beta-hairpin between the DNA strands. Then UvrB probes one DNA strand for the presence of a lesion. If a lesion is found the UvrA subunits dissociate and the UvrB-DNA preincision complex is formed. This complex is subsequently bound by UvrC and the second UvrB is released. If no lesion is found, the DNA wraps around the other UvrB subunit that will check the other stand for damage. This chain is UvrABC system protein B, found in Rickettsia bellii (strain OSU 85-389).